The sequence spans 127 residues: MPLAILLSLLRHCGVRAALPTPRHLHTSPWRADCSRASLTRLRRQAYARLYPVLLVKQDGSTIHIRYREPRRMLAMPLDLDALSPEERRARFRKREAQLQQKREEEPEVVDSFDTERYKQFWTKTKK.

The N-terminal 32 residues, 1–32 (MPLAILLSLLRHCGVRAALPTPRHLHTSPWRA), are a transit peptide targeting the mitochondrion. S84 carries the post-translational modification Phosphoserine.

It belongs to the mitochondrion-specific ribosomal protein mL55 family. In terms of assembly, component of the mitochondrial ribosome large subunit (39S) which comprises a 16S rRNA and about 50 distinct proteins.

It is found in the mitochondrion. The polypeptide is Large ribosomal subunit protein mL55 (Mrpl55) (Mus musculus (Mouse)).